Reading from the N-terminus, the 98-residue chain is DNA-binding protein Fis (98 aa).

Residues 74 to 93 constitute a DNA-binding region (H-T-H motif); that stretch reads QTRAAQMMGINRGTLRKKLK.

This sequence belongs to the transcriptional regulatory Fis family. As to quaternary structure, homodimer.

Activates ribosomal RNA transcription. Plays a direct role in upstream activation of rRNA promoters. This Proteus hauseri protein is DNA-binding protein Fis.